The chain runs to 367 residues: Alanine racemase (367 aa).

The Proton acceptor; specific for D-alanine role is filled by Lys-40. Position 40 is an N6-(pyridoxal phosphate)lysine (Lys-40). Substrate is bound at residue Arg-136. Tyr-263 functions as the Proton acceptor; specific for L-alanine in the catalytic mechanism. Substrate is bound at residue Met-310.

It belongs to the alanine racemase family. The cofactor is pyridoxal 5'-phosphate.

It catalyses the reaction L-alanine = D-alanine. The protein operates within amino-acid biosynthesis; D-alanine biosynthesis; D-alanine from L-alanine: step 1/1. Catalyzes the interconversion of L-alanine and D-alanine. May also act on other amino acids. The protein is Alanine racemase (alr) of Streptococcus pneumoniae (strain 70585).